The chain runs to 534 residues: CTP synthase (534 aa).

Residues 1–267 (MSKYIVVTGG…GSYILNRLNI (267 aa)) are amidoligase domain. Ser13 provides a ligand contact to CTP. Ser13 serves as a coordination point for UTP. Position 14–19 (14–19 (SIGKGI)) interacts with ATP. Residue Tyr54 participates in L-glutamine binding. Asp71 provides a ligand contact to ATP. 2 residues coordinate Mg(2+): Asp71 and Glu141. Residues 148–150 (DIE), 188–193 (KTKPTQ), and Lys224 each bind CTP. Residues 188–193 (KTKPTQ) and Lys224 each bind UTP. One can recognise a Glutamine amidotransferase type-1 domain in the interval 294–532 (KIAVVGKYIE…IKAAKNKKQN (239 aa)). L-glutamine is bound at residue Gly353. The Nucleophile; for glutamine hydrolysis role is filled by Cys380. Residues 381–384 (LGLH), Glu403, and Arg460 each bind L-glutamine. Catalysis depends on residues His505 and Glu507.

This sequence belongs to the CTP synthase family. As to quaternary structure, homotetramer.

The enzyme catalyses UTP + L-glutamine + ATP + H2O = CTP + L-glutamate + ADP + phosphate + 2 H(+). The catalysed reaction is L-glutamine + H2O = L-glutamate + NH4(+). It catalyses the reaction UTP + NH4(+) + ATP = CTP + ADP + phosphate + 2 H(+). Its pathway is pyrimidine metabolism; CTP biosynthesis via de novo pathway; CTP from UDP: step 2/2. With respect to regulation, allosterically activated by GTP, when glutamine is the substrate; GTP has no effect on the reaction when ammonia is the substrate. The allosteric effector GTP functions by stabilizing the protein conformation that binds the tetrahedral intermediate(s) formed during glutamine hydrolysis. Inhibited by the product CTP, via allosteric rather than competitive inhibition. Its function is as follows. Catalyzes the ATP-dependent amination of UTP to CTP with either L-glutamine or ammonia as the source of nitrogen. Regulates intracellular CTP levels through interactions with the four ribonucleotide triphosphates. In Methanosphaera stadtmanae (strain ATCC 43021 / DSM 3091 / JCM 11832 / MCB-3), this protein is CTP synthase.